Here is a 308-residue protein sequence, read N- to C-terminus: Tyramine--L-glutamate ligase (308 aa).

The region spanning K89–N291 is the ATP-grasp domain. Residue T115 to S192 participates in ATP binding. D252, E264, and N266 together coordinate Mg(2+). Mn(2+) contacts are provided by D252, E264, and N266.

Mg(2+) serves as cofactor. The cofactor is Mn(2+).

It catalyses the reaction tyramine + L-glutamate + ATP = gamma-L-glutamyltyramine + ADP + phosphate + H(+). The protein operates within cofactor biosynthesis; methanofuran biosynthesis. Its function is as follows. Catalyzes the formation of an amide bond between tyramine and the gamma carboxy group of L-glutamate. The enzyme also accepts phenylethylamine in vitro. The sequence is that of Tyramine--L-glutamate ligase (mfnD) from Methanocaldococcus jannaschii (strain ATCC 43067 / DSM 2661 / JAL-1 / JCM 10045 / NBRC 100440) (Methanococcus jannaschii).